A 139-amino-acid polypeptide reads, in one-letter code: Plastocyanin (139 aa).

An N-terminal signal peptide occupies residues 1–34 (MKLIAASLRRLSLAVLTVLLVVSSFAVFTPSAAA). In terms of domain architecture, Plastocyanin-like spans 35–135 (ETYTVKLGSD…HRGAGMVGKI (101 aa)). 4 residues coordinate Cu cation: histidine 73, cysteine 123, histidine 126, and methionine 131.

The protein belongs to the plastocyanin family. The cofactor is Cu(2+).

It is found in the cellular thylakoid membrane. In terms of biological role, participates in electron transfer between P700 and the cytochrome b6-f complex in photosystem I. In Trichormus variabilis (strain ATCC 29413 / PCC 7937) (Anabaena variabilis), this protein is Plastocyanin (petE).